A 259-amino-acid chain; its full sequence is Tryptophan synthase alpha chain (259 aa).

Catalysis depends on proton acceptor residues E35 and D46.

Belongs to the TrpA family. In terms of assembly, tetramer of two alpha and two beta chains.

The catalysed reaction is (1S,2R)-1-C-(indol-3-yl)glycerol 3-phosphate + L-serine = D-glyceraldehyde 3-phosphate + L-tryptophan + H2O. The protein operates within amino-acid biosynthesis; L-tryptophan biosynthesis; L-tryptophan from chorismate: step 5/5. In terms of biological role, the alpha subunit is responsible for the aldol cleavage of indoleglycerol phosphate to indole and glyceraldehyde 3-phosphate. This is Tryptophan synthase alpha chain from Methanococcus maripaludis (strain C5 / ATCC BAA-1333).